A 393-amino-acid polypeptide reads, in one-letter code: SH3 domain-binding protein 5-like (393 aa).

Positions 1–58 (MAELRQVPGGRETPQGELRPEVVEDEVPRSPVAEEPGGGGSSSSEAKLSPREEEELDP) are disordered. Phosphothreonine is present on threonine 13. A compositionally biased stretch (basic and acidic residues) spans 18-28 (LRPEVVEDEVP). Residues serine 30 and serine 49 each carry the phosphoserine modification. Coiled-coil stretches lie at residues 59–140 (RIQE…YERA) and 169–272 (WQEM…EQIH). The tract at residues 273 to 332 (ARRRGGLPPHPLGPRRSSPVGAEAGPEDMEDGDSGIEGAEGAGLEEGSSLGPGPAPDTDT) is disordered. Residues 297–306 (GPEDMEDGDS) show a composition bias toward acidic residues. Positions 317 to 332 (EEGSSLGPGPAPDTDT) are enriched in low complexity. Serine 343, serine 350, serine 358, serine 362, and serine 378 each carry phosphoserine. The tract at residues 362 to 393 (SLDGQELGTRSGGRRGSDGGARGGRHQRSVSL) is disordered. Over residues 384 to 393 (GGRHQRSVSL) the composition is skewed to basic residues.

Belongs to the SH3BP5 family.

Functions as a guanine nucleotide exchange factor (GEF) for RAB11A. The chain is SH3 domain-binding protein 5-like (SH3BP5L) from Homo sapiens (Human).